The chain runs to 265 residues: Undecaprenyl-diphosphatase (265 aa).

A run of 7 helical transmembrane segments spans residues Ser38–Trp58, Leu80–Glu100, Pro107–Ala127, Ile135–Gly155, Ala175–Tyr195, Ala213–Leu233, and Phe244–Ile264.

It belongs to the UppP family.

It localises to the cell inner membrane. It catalyses the reaction di-trans,octa-cis-undecaprenyl diphosphate + H2O = di-trans,octa-cis-undecaprenyl phosphate + phosphate + H(+). Its function is as follows. Catalyzes the dephosphorylation of undecaprenyl diphosphate (UPP). Confers resistance to bacitracin. The polypeptide is Undecaprenyl-diphosphatase (Rhizobium etli (strain ATCC 51251 / DSM 11541 / JCM 21823 / NBRC 15573 / CFN 42)).